The chain runs to 384 residues: MENTDELVSIELPAPASWKKLFYPKRAGTPRKTEIVFVAPTGEEISSRKQLEQYLKAHPGNPVISEFEWTTGETPRRSSRISQKVKATTPTPDKEPLLKKRRSSLTKKDNKEAAEKNEEAAVKENMDVDKDGKTENAEAEKEKEKEGVTEIAEAEKENNEGEKTEAEKVNKEGEKTEAGKEGQTEIAEAEKEKEGEKAEAENKEAEVVRDKKESMEVDTSELEKKAGSGEGAEEPSKVEGLKDTEMKEAQEVVTEADVEKKPAEEKTENKGSVTTEANGEQNVTLGEPNLDADAEADKGKESKEYDEKTTEAEANKENDTQESDEKKTEAAANKENETQESDVKKTEAAVAEEKSNDMKAEDTNRSLEANQVQQQQGAAASVSC.

In terms of domain architecture, MBD spans 4–74; that stretch reads TDELVSIELP…SEFEWTTGET (71 aa). The disordered stretch occupies residues 65–384; sequence SEFEWTTGET…QQGAAASVSC (320 aa). The span at 80–91 shows a compositional bias: polar residues; sequence RISQKVKATTPT. Residues 100 to 224 are a coiled coil; that stretch reads KRRSSLTKKD…MEVDTSELEK (125 aa). 3 stretches are compositionally biased toward basic and acidic residues: residues 106–227, 234–250, and 257–269; these read TKKD…KKAG, EPSK…KEAQ, and DVEK…KTEN. Positions 270–284 are enriched in polar residues; the sequence is KGSVTTEANGEQNVT. Basic and acidic residues predominate over residues 295–365; that stretch reads EADKGKESKE…NDMKAEDTNR (71 aa). The stretch at 310–356 forms a coiled coil; sequence TEAEANKENDTQESDEKKTEAAANKENETQESDVKKTEAAVAEEKSN. The residue at position 323 (Ser-323) is a Phosphoserine. Low complexity predominate over residues 369–384; sequence ANQVQQQQGAAASVSC.

As to expression, expressed in leaves, buds, flowers, stems and siliques.

It localises to the nucleus. Functionally, probable transcriptional regulator. Required for nucleolar dominance that consist in the silencing of rRNA genes inherited from one progenitor in genetic hybrids. In Arabidopsis thaliana (Mouse-ear cress), this protein is Methyl-CpG-binding domain-containing protein 10 (MBD10).